Consider the following 559-residue polypeptide: DDB1- and CUL4-associated factor 10 (559 aa).

The segment at 1–119 (MFPFGPHSPG…HGLGAGLGGP (119 aa)) is disordered. Residues Ser-53, Ser-63, Ser-89, and Ser-92 each carry the phosphoserine modification. Over residues 56-86 (RPGAPSLSPAPRSGELGLPGAPESSTASAPG) the composition is skewed to low complexity. Pro residues predominate over residues 87 to 97 (EPSPPSPPCRR). Arg-134 is subject to Omega-N-methylarginine. WD repeat units follow at residues 166–205 (RTHG…HIKT), 209–247 (AHED…TKVC), 251–290 (GHTS…EDGC), and 296–335 (FHTR…KSLE). Ser-349 carries the phosphoserine modification. Residues 350 to 367 (SSDLTTSSSSSGPRVSGS) are compositionally biased toward low complexity. The interval 350 to 396 (SSDLTTSSSSSGPRVSGSPCHHSDSNSSEKHMSRASQREGVSPRNSL) is disordered. Residues 370–381 (HHSDSNSSEKHM) show a composition bias toward basic and acidic residues. 3 WD repeats span residues 408–448 (DHGN…QEGA), 470–508 (VGRG…SELV), and 526–559 (SHND…QPKF).

The protein belongs to the WD repeat DCAF10 family. Interacts with DDB1.

It participates in protein modification; protein ubiquitination. Functionally, may function as a substrate receptor for CUL4-DDB1 E3 ubiquitin-protein ligase complex. The polypeptide is DDB1- and CUL4-associated factor 10 (DCAF10) (Homo sapiens (Human)).